A 420-amino-acid chain; its full sequence is Protein-lysine N-trimethyltransferase SMYD5 (420 aa).

The region spanning 29–358 is the SET domain; it reads AEARFISSAK…AGEEICISYL (330 aa). The segment at 104–142 adopts an MYND-type zinc-finger fold; that stretch reads PEQCSIRKDLHQQCPRCQVTYCSAECRQAALEQYHQVLC. Tyr357 serves as a coordination point for S-adenosyl-L-methionine. Residues 392-420 are disordered; it reads DDPDVTSDEEEEAEGETDDAELEDEMTDV.

Belongs to the class V-like SAM-binding methyltransferase superfamily.

The protein localises to the cytoplasm. It carries out the reaction L-lysyl-[protein] + 3 S-adenosyl-L-methionine = N(6),N(6),N(6)-trimethyl-L-lysyl-[protein] + 3 S-adenosyl-L-homocysteine + 3 H(+). It catalyses the reaction L-lysyl(20)-[histone H4] + 3 S-adenosyl-L-methionine = N(6),N(6),N(6)-trimethyl-L-lysyl(20)-[histone H4] + 3 S-adenosyl-L-homocysteine + 3 H(+). The enzyme catalyses L-lysyl(36)-[histone H3] + 3 S-adenosyl-L-methionine = N(6),N(6),N(6)-trimethyl-L-lysyl(36)-[histone H3] + 3 S-adenosyl-L-homocysteine + 3 H(+). Functionally, protein-lysine N-trimethyltransferase that specifically catalyzes trimethylation of 'Lys-22' of the RPL40/eL40 subunit of the 60S ribosome, thereby promoting translation elongation and protein synthesis. May also act as a histone methyltransferase in the context of histone octamers, but not on nucleosome substrates: trimethylates 'Lys-36' of histone H3 and 'Lys-20' of histone H4 to form H3K36me3 and H4K20me3, respectively. The histone methyltransferase activity, which is independent of its SET domain, is however unsure in vivo. The chain is Protein-lysine N-trimethyltransferase SMYD5 (SMYD5) from Gallus gallus (Chicken).